The chain runs to 802 residues: G-type lectin S-receptor-like serine/threonine-protein kinase At1g61550 (802 aa).

A signal peptide spans 1 to 19; that stretch reads MTRFACFLFSTLLLSFSYA. The Bulb-type lectin domain occupies 20-139; that stretch reads AITPTSPLSI…VSGITLWQSF (120 aa). Topologically, residues 20–421 are extracellular; the sequence is AITPTSPLSI…EMGGNQRKKT (402 aa). Residues Asn48, Asn89, Asn112, Asn231, and Asn262 are each glycosylated (N-linked (GlcNAc...) asparagine). The EGF-like domain maps to 273-309; the sequence is PANTCDFYGVCGPFGLCVMSIPPKCKCFKGFVPQFSE. Disulfide bonds link Cys277/Cys289 and Cys283/Cys297. N-linked (GlcNAc...) asparagine glycans are attached at residues Asn315, Asn331, and Asn370. One can recognise a PAN domain in the interval 328–410; that stretch reads CQGNSTGRHV…GELLSIRLAS (83 aa). Disulfide bonds link Cys363/Cys384 and Cys367/Cys373. Residues 422–442 traverse the membrane as a helical segment; sequence IIASIVSISLFVTLASAAFGF. Residues 443–802 lie on the Cytoplasmic side of the membrane; that stretch reads WRYRLKHNAI…EVTQSVVLGR (360 aa). In terms of domain architecture, Protein kinase spans 489 to 774; sequence FSLVNKLGQG…DLPLPKEPTF (286 aa). ATP contacts are provided by residues 495 to 503 and Lys517; that span reads LGQGGFGPV. Phosphoserine is present on residues Ser523 and Ser538. The interval 578 to 595 is caM-binding; that stretch reads RKRVEIDWPKRFSIIQGI. Residue Asp614 is the Proton acceptor of the active site. 2 positions are modified to phosphoserine: Ser618 and Ser631. Residue Thr648 is modified to Phosphothreonine. Ser691 carries the phosphoserine modification.

The protein belongs to the protein kinase superfamily. Ser/Thr protein kinase family.

It is found in the cell membrane. The enzyme catalyses L-seryl-[protein] + ATP = O-phospho-L-seryl-[protein] + ADP + H(+). It carries out the reaction L-threonyl-[protein] + ATP = O-phospho-L-threonyl-[protein] + ADP + H(+). In Arabidopsis thaliana (Mouse-ear cress), this protein is G-type lectin S-receptor-like serine/threonine-protein kinase At1g61550.